The following is a 281-amino-acid chain: Probable endonuclease 4 (281 aa).

Residues His-69, His-109, Glu-145, Asp-179, His-182, His-216, Asp-229, His-231, and Glu-261 each coordinate Zn(2+).

This sequence belongs to the AP endonuclease 2 family. Zn(2+) serves as cofactor.

It catalyses the reaction Endonucleolytic cleavage to 5'-phosphooligonucleotide end-products.. Its function is as follows. Endonuclease IV plays a role in DNA repair. It cleaves phosphodiester bonds at apurinic or apyrimidinic (AP) sites, generating a 3'-hydroxyl group and a 5'-terminal sugar phosphate. The polypeptide is Probable endonuclease 4 (Yersinia enterocolitica serotype O:8 / biotype 1B (strain NCTC 13174 / 8081)).